We begin with the raw amino-acid sequence, 662 residues long: Histidine decarboxylase (662 aa).

The substrate site is built by Tyr-88 and His-201. Lys-312 carries the post-translational modification N6-(pyridoxal phosphate)lysine. The segment at 489–518 (QPSPRAKNVIPPPPGTRGLSLESVSEGGDD) is disordered.

It belongs to the group II decarboxylase family. As to quaternary structure, homodimer. Requires pyridoxal 5'-phosphate as cofactor.

It carries out the reaction L-histidine + H(+) = histamine + CO2. It functions in the pathway amine and polyamine biosynthesis; histamine biosynthesis; histamine from L-histidine: step 1/1. Its function is as follows. Catalyzes the biosynthesis of histamine from histidine. This Mus musculus (Mouse) protein is Histidine decarboxylase (Hdc).